The chain runs to 302 residues: 4-hydroxy-tetrahydrodipicolinate synthase (302 aa).

T46 is a binding site for pyruvate. Y134 (proton donor/acceptor) is an active-site residue. K162 (schiff-base intermediate with substrate) is an active-site residue. Pyruvate is bound at residue I204.

This sequence belongs to the DapA family. In terms of assembly, homotetramer; dimer of dimers.

The protein localises to the cytoplasm. It catalyses the reaction L-aspartate 4-semialdehyde + pyruvate = (2S,4S)-4-hydroxy-2,3,4,5-tetrahydrodipicolinate + H2O + H(+). Its pathway is amino-acid biosynthesis; L-lysine biosynthesis via DAP pathway; (S)-tetrahydrodipicolinate from L-aspartate: step 3/4. In terms of biological role, catalyzes the condensation of (S)-aspartate-beta-semialdehyde [(S)-ASA] and pyruvate to 4-hydroxy-tetrahydrodipicolinate (HTPA). This is 4-hydroxy-tetrahydrodipicolinate synthase from Xanthomonas axonopodis pv. citri (strain 306).